Here is a 506-residue protein sequence, read N- to C-terminus: Lysine--tRNA ligase (506 aa).

The Mg(2+) site is built by Glu415 and Glu422.

Belongs to the class-II aminoacyl-tRNA synthetase family. Homodimer. It depends on Mg(2+) as a cofactor.

It is found in the cytoplasm. The catalysed reaction is tRNA(Lys) + L-lysine + ATP = L-lysyl-tRNA(Lys) + AMP + diphosphate. The chain is Lysine--tRNA ligase (lysS) from Buchnera aphidicola subsp. Acyrthosiphon pisum (strain APS) (Acyrthosiphon pisum symbiotic bacterium).